The chain runs to 375 residues: Mitogen-activated protein kinase 1 (375 aa).

The Protein kinase domain maps to 43 to 329 (RPPIMPIGRG…VEEALAHPYL (287 aa)). Residues 49-57 (IGRGAYGIV) and lysine 72 each bind ATP. Aspartate 169 serves as the catalytic Proton acceptor. Threonine 201 bears the Phosphothreonine mark. Residues 201–203 (TEY) carry the TXY motif. The residue at position 203 (tyrosine 203) is a Phosphotyrosine. The residue at position 206 (threonine 206) is a Phosphothreonine.

The protein belongs to the protein kinase superfamily. CMGC Ser/Thr protein kinase family. MAP kinase subfamily. It depends on Mg(2+) as a cofactor. Post-translationally, activated by wounding and UV-C in a cultivar-dependent manner; phosphorylated in cv. Pungchon but not in cv. Subicho.

The enzyme catalyses L-seryl-[protein] + ATP = O-phospho-L-seryl-[protein] + ADP + H(+). It carries out the reaction L-threonyl-[protein] + ATP = O-phospho-L-threonyl-[protein] + ADP + H(+). Its activity is regulated as follows. Activated by threonine and tyrosine phosphorylation. Stress-inducible protein kinase involved in oxidative stress-mediated and innate immune MAP kinase signaling cascades. This is Mitogen-activated protein kinase 1 from Capsicum annuum (Capsicum pepper).